The chain runs to 91 residues: Molybdopterin synthase sulfur carrier subunit (91 aa).

At glycine 91 the chain carries 1-thioglycine; alternate. At glycine 91 the chain carries Glycyl adenylate; alternate.

The protein belongs to the MoaD family. MOCS2A subfamily. Heterotetramer; composed of 2 small (MOCS2A) and 2 large (MOCS2B) subunits. C-terminal thiocarboxylation occurs in 2 steps, it is first acyl-adenylated (-COAMP) via the hesA/moeB/thiF part of MOCS3, then thiocarboxylated (-COSH) via the rhodanese domain of MOCS3.

The protein localises to the cytoplasm. Its pathway is cofactor biosynthesis; molybdopterin biosynthesis. Functionally, acts as a sulfur carrier required for molybdopterin biosynthesis. Component of the molybdopterin synthase complex that catalyzes the conversion of precursor Z into molybdopterin by mediating the incorporation of 2 sulfur atoms into precursor Z to generate a dithiolene group. In the complex, serves as sulfur donor by being thiocarboxylated (-COSH) at its C-terminus by MOCS3. After interaction with MOCS2B, the sulfur is then transferred to precursor Z to form molybdopterin. In Anopheles gambiae (African malaria mosquito), this protein is Molybdopterin synthase sulfur carrier subunit.